Reading from the N-terminus, the 281-residue chain is MRVRKPAVAGYFYESGREELLQQIEWAVKHELGPKALQMPKLGGEALGGVAPHAGYMYSGPVAAWLYSALAGYGKPDVFVIVGPNHYGIGAPVAIMKSGAWETPLGRVEVDRELAEVITSHFKEVEDDFYAFSKEHSVEVQVPFIQYYFGDVKIVPIVMWRQTLSTSRELGRAIAKALKEYGRKAYVIASSDFNHYEPHDITTRKDEMAISKILKLDEAGLFEISSKFDISICGIGPIGVLIAAAKELGYINVTLLKHATSGDTSGYKDETVGYASILFYR.

Belongs to the MEMO1 family.

This Pyrobaculum aerophilum (strain ATCC 51768 / DSM 7523 / JCM 9630 / CIP 104966 / NBRC 100827 / IM2) protein is MEMO1 family protein PAE0818.